The sequence spans 208 residues: Outer-membrane lipoprotein carrier protein (208 aa).

The signal sequence occupies residues 1–22 (MKNLLCAVMLTSPLLYSTAVFA).

The protein belongs to the LolA family. As to quaternary structure, monomer.

It localises to the periplasm. Functionally, participates in the translocation of lipoproteins from the inner membrane to the outer membrane. Only forms a complex with a lipoprotein if the residue after the N-terminal Cys is not an aspartate (The Asp acts as a targeting signal to indicate that the lipoprotein should stay in the inner membrane). The polypeptide is Outer-membrane lipoprotein carrier protein (Shewanella sp. (strain W3-18-1)).